The primary structure comprises 149 residues: Deoxyuridine 5'-triphosphate nucleotidohydrolase (149 aa).

Substrate is bound by residues 68-70 (RSG), Asn81, 85-87 (LID), and Met95.

This sequence belongs to the dUTPase family. Mg(2+) is required as a cofactor.

It catalyses the reaction dUTP + H2O = dUMP + diphosphate + H(+). Its pathway is pyrimidine metabolism; dUMP biosynthesis; dUMP from dCTP (dUTP route): step 2/2. Its function is as follows. This enzyme is involved in nucleotide metabolism: it produces dUMP, the immediate precursor of thymidine nucleotides and it decreases the intracellular concentration of dUTP so that uracil cannot be incorporated into DNA. This chain is Deoxyuridine 5'-triphosphate nucleotidohydrolase, found in Janthinobacterium sp. (strain Marseille) (Minibacterium massiliensis).